A 92-amino-acid polypeptide reads, in one-letter code: Large ribosomal subunit protein bL25 (92 aa).

This sequence belongs to the bacterial ribosomal protein bL25 family. In terms of assembly, part of the 50S ribosomal subunit; part of the 5S rRNA/L5/L18/L25 subcomplex. Contacts the 5S rRNA. Binds to the 5S rRNA independently of L5 and L18.

This is one of the proteins that binds to the 5S RNA in the ribosome where it forms part of the central protuberance. The sequence is that of Large ribosomal subunit protein bL25 from Vibrio cholerae serotype O1 (strain ATCC 39541 / Classical Ogawa 395 / O395).